Consider the following 254-residue polypeptide: Transmembrane protein 269 (254 aa).

A run of 5 helical transmembrane segments spans residues 44 to 64 (IINA…FCSF), 69 to 89 (YCAS…GTMT), 113 to 135 (LASA…IYVL), 171 to 191 (LTKG…LFMI), and 210 to 230 (IVYI…TAFY).

It localises to the membrane. This Mus musculus (Mouse) protein is Transmembrane protein 269.